A 158-amino-acid chain; its full sequence is Low molecular weight phosphotyrosine protein phosphatase (158 aa).

At Ala-2 the chain carries N-acetylalanine. Cys-13 acts as the Nucleophile in catalysis. Residue Arg-19 is part of the active site. Asp-130 serves as the catalytic Proton donor. 2 positions are modified to phosphotyrosine: Tyr-132 and Tyr-133.

Belongs to the low molecular weight phosphotyrosine protein phosphatase family. In terms of assembly, interacts with EPHA2; dephosphorylates EPHA2. Interacts with EPHB1. Interacts with the SH3 domain of SPTAN1. There is no interaction observed for isoform 2. In terms of processing, phosphorylated by LCK. Phosphorylation at Tyr-132 increases its phosphatase activity.

The protein localises to the cytoplasm. It catalyses the reaction O-phospho-L-tyrosyl-[protein] + H2O = L-tyrosyl-[protein] + phosphate. The enzyme catalyses a phosphate monoester + H2O = an alcohol + phosphate. Inhibited by sulfhydryl reagents. Its function is as follows. Acts on tyrosine phosphorylated proteins, low-MW aryl phosphates and natural and synthetic acyl phosphates with differences in substrate specificity between isoform 1 and isoform 2. This chain is Low molecular weight phosphotyrosine protein phosphatase, found in Rattus norvegicus (Rat).